A 294-amino-acid chain; its full sequence is Indole-3-glycerol phosphate synthase (294 aa).

Belongs to the TrpC family.

The enzyme catalyses 1-(2-carboxyphenylamino)-1-deoxy-D-ribulose 5-phosphate + H(+) = (1S,2R)-1-C-(indol-3-yl)glycerol 3-phosphate + CO2 + H2O. It participates in amino-acid biosynthesis; L-tryptophan biosynthesis; L-tryptophan from chorismate: step 4/5. In Crocosphaera subtropica (strain ATCC 51142 / BH68) (Cyanothece sp. (strain ATCC 51142)), this protein is Indole-3-glycerol phosphate synthase.